Here is a 532-residue protein sequence, read N- to C-terminus: Tegument protein UL21 (532 aa).

Positions 251–276 (SPSVSSAPPPSAPDASLPPPGLQEAA) are disordered. Residues 257–276 (APPPSAPDASLPPPGLQEAA) show a composition bias toward pro residues.

It belongs to the alphaherpesvirinae UL21 protein family. Interacts (via C-terminus) with UL16.

The protein resides in the virion tegument. Its subcellular location is the host cytoplasm. It localises to the host nucleus. In terms of biological role, may participate in DNA packaging/capsid maturation events. Promotes efficient incorporation of tegument proteins UL46, UL49, and US3 into virions. May also play a role in capsid transport to the trans-Golgi network (TGN). The polypeptide is Tegument protein UL21 (Human herpesvirus 2 (strain HG52) (HHV-2)).